Consider the following 509-residue polypeptide: Activin receptor type-1 (509 aa).

The first 20 residues, 1–20, serve as a signal peptide directing secretion; it reads MVDGAMILSVLMMMALPSPS. At 21–123 the chain is on the extracellular side; it reads MEDEEPKVNP…FPGSQNFHLE (103 aa). A glycan (N-linked (GlcNAc...) asparagine) is linked at Asn-102. A helical membrane pass occupies residues 124 to 146; sequence VGLIILSVVFAVCLFACILGVAL. The Cytoplasmic portion of the chain corresponds to 147 to 509; that stretch reads RKFKRRNQER…NSLDKLKTDC (363 aa). Positions 178–207 constitute a GS domain; sequence STLAELLDHSCTSGSGSGLPFLVQRTVARQ. Residues 208-502 form the Protein kinase domain; it reads ITLLECVGKG…KTLTKIDNSL (295 aa). Residues 214–222 and Lys-235 each bind ATP; that span reads VGKGRYGEV. Residue Asp-336 is the Proton acceptor of the active site. Ser-501 carries the phosphoserine modification.

The protein belongs to the protein kinase superfamily. TKL Ser/Thr protein kinase family. TGFB receptor subfamily. Interacts with FKBP1A. Interacts with FCHO1. Interacts with CLU. Interacts with type II receptors AMHR2 and ACVR2A. Interacts with BMP7. Interacts with GDF2/BMP9. Interacts with BMP6 (when glycosylated); the interaction may induce HAMP expression. Interacts with TSC22D1/TSC-22. It depends on Mg(2+) as a cofactor. Mn(2+) serves as cofactor. As to expression, urogenital ridge, testis, ovary, brain and lungs.

It is found in the membrane. The enzyme catalyses L-threonyl-[receptor-protein] + ATP = O-phospho-L-threonyl-[receptor-protein] + ADP + H(+). It carries out the reaction L-seryl-[receptor-protein] + ATP = O-phospho-L-seryl-[receptor-protein] + ADP + H(+). Functionally, bone morphogenetic protein (BMP) type I receptor that is involved in a wide variety of biological processes, including bone, heart, cartilage, nervous, and reproductive system development and regulation. As a type I receptor, forms heterotetrameric receptor complexes with the type II receptors AMHR2, ACVR2A ors ACVR2B. Upon binding of ligands such as BMP7 or GDF2/BMP9 to the heteromeric complexes, type II receptors transphosphorylate ACVR1 intracellular domain. In turn, ACVR1 kinase domain is activated and subsequently phosphorylates SMAD1/5/8 proteins that transduce the signal. In addition to its role in mediating BMP pathway-specific signaling, suppresses TGFbeta/activin pathway signaling by interfering with the binding of activin to its type II receptor. Besides canonical SMAD signaling, can activate non-canonical pathways such as p38 mitogen-activated protein kinases/MAPKs. May promote the expression of HAMP, potentially via its interaction with BMP6. In Rattus norvegicus (Rat), this protein is Activin receptor type-1 (Acvr1).